The primary structure comprises 824 residues: Neuronal PAS domain-containing protein 2 (824 aa).

A compositionally biased stretch (basic and acidic residues) spans 1–10 (MDEDEKDRAK). The interval 1-21 (MDEDEKDRAKRASRNKSEKKR) is disordered. The sufficient for heterodimer formation with BMAL1, E-box binding and for the effect of NADPH stretch occupies residues 1–61 (MDEDEKDRAK…VIGFLQKHNE (61 aa)). The bHLH domain occupies 9 to 59 (AKRASRNKSEKKRRDQFNVLIKELSSMLPGNTRKMDKTTVLEKVIGFLQKH). A PAS 1 domain is found at 82 to 152 (NEEFTQLMLE…KILSSHMLVT (71 aa)). Heme b is bound by residues histidine 119 and histidine 171. Residues 237-307 (FLKEMCIVDE…RCHQHLMQFG (71 aa)) enclose the PAS 2 domain. The PAC domain occupies 311 to 354 (SCCYRFLTKGQQWIWLQTHYYITYHQWNSKPEFIVCTHSVVSYA). 4 disordered regions span residues 367-437 (EDPP…MAEA), 556-667 (SSTQ…PDFS), 681-704 (QPMMPGSCDARQPSEVSRTGRQVK), and 739-824 (PSFP…QPPR). Basic and acidic residues predominate over residues 378 to 390 (ALKDKGSSLEPRQ). Residues 421 to 431 (TAMSEPTSTPT) show a composition bias toward polar residues. A compositionally biased stretch (low complexity) spans 559–576 (QRPEAQQQLQQRSAAVTQ). The segment covering 587-610 (GQISSAQVTSQHLLRESSVISTQG) has biased composition (polar residues). Positions 614 to 636 (MRSSQLMQSSGRSGSSLVSPFSS) are enriched in low complexity. Composition is skewed to polar residues over residues 645–664 (LNLTTPASTSQDASQCQPSP) and 694–704 (SEVSRTGRQVK). Positions 739–760 (PSFPASQPSPLQPAQARQQPPQ) are enriched in low complexity. Positions 766 to 789 (QAPTSLHSEQQDSLLLSTYSQQPG) are enriched in polar residues. Positions 794-805 (PQPPPAQPQPLR) are enriched in pro residues. A compositionally biased stretch (low complexity) spans 809–824 (RVSSLSESSGLQQPPR).

In terms of assembly, component of the circadian clock oscillator which includes the CRY proteins, CLOCK or NPAS2, BMAL1 or BMAL2, CSNK1D and/or CSNK1E, TIMELESS and the PER proteins. Efficient DNA binding requires dimerization with another bHLH protein. Forms a heterodimer with BMAL1 and this heterodimerization is required for E-box-dependent transactivation. Interacts with NCOA3, KAT2B, CREBBP and EP300. Heme serves as cofactor.

Its subcellular location is the nucleus. Its activity is regulated as follows. Carbon monoxide (CO) and the redox state of the cell can modulate the transcriptional activity of the NPAS2-BMAL1 heterodimer. NADH and NADPH enhance the DNA-binding activity of the heterodimer whereas CO binds the heme group in NPAS2 and inhibits the DNA-binding activity of the heterodimer. Transcriptional activator which forms a core component of the circadian clock. The circadian clock, an internal time-keeping system, regulates various physiological processes through the generation of approximately 24 hour circadian rhythms in gene expression, which are translated into rhythms in metabolism and behavior. It is derived from the Latin roots 'circa' (about) and 'diem' (day) and acts as an important regulator of a wide array of physiological functions including metabolism, sleep, body temperature, blood pressure, endocrine, immune, cardiovascular, and renal function. Consists of two major components: the central clock, residing in the suprachiasmatic nucleus (SCN) of the brain, and the peripheral clocks that are present in nearly every tissue and organ system. Both the central and peripheral clocks can be reset by environmental cues, also known as Zeitgebers (German for 'timegivers'). The predominant Zeitgeber for the central clock is light, which is sensed by retina and signals directly to the SCN. The central clock entrains the peripheral clocks through neuronal and hormonal signals, body temperature and feeding-related cues, aligning all clocks with the external light/dark cycle. Circadian rhythms allow an organism to achieve temporal homeostasis with its environment at the molecular level by regulating gene expression to create a peak of protein expression once every 24 hours to control when a particular physiological process is most active with respect to the solar day. Transcription and translation of core clock components (CLOCK, NPAS2, BMAL1, BMAL2, PER1, PER2, PER3, CRY1 and CRY2) plays a critical role in rhythm generation, whereas delays imposed by post-translational modifications (PTMs) are important for determining the period (tau) of the rhythms (tau refers to the period of a rhythm and is the length, in time, of one complete cycle). A diurnal rhythm is synchronized with the day/night cycle, while the ultradian and infradian rhythms have a period shorter and longer than 24 hours, respectively. Disruptions in the circadian rhythms contribute to the pathology of cardiovascular diseases, cancer, metabolic syndromes and aging. A transcription/translation feedback loop (TTFL) forms the core of the molecular circadian clock mechanism. Transcription factors, CLOCK or NPAS2 and BMAL1 or BMAL2, form the positive limb of the feedback loop, act in the form of a heterodimer and activate the transcription of core clock genes and clock-controlled genes (involved in key metabolic processes), harboring E-box elements (5'-CACGTG-3') within their promoters. The core clock genes: PER1/2/3 and CRY1/2 which are transcriptional repressors form the negative limb of the feedback loop and interact with the CLOCK|NPAS2-BMAL1|BMAL2 heterodimer inhibiting its activity and thereby negatively regulating their own expression. This heterodimer also activates nuclear receptors NR1D1/2 and RORA/B/G, which form a second feedback loop and which activate and repress BMAL1 transcription, respectively. The NPAS2-BMAL1 heterodimer positively regulates the expression of MAOA, F7 and LDHA and modulates the circadian rhythm of daytime contrast sensitivity by regulating the rhythmic expression of adenylate cyclase type 1 (ADCY1) in the retina. NPAS2 plays an important role in sleep homeostasis and in maintaining circadian behaviors in normal light/dark and feeding conditions and in the effective synchronization of feeding behavior with scheduled food availability. Regulates the gene transcription of key metabolic pathways in the liver and is involved in DNA damage response by regulating several cell cycle and DNA repair genes. Controls the circadian rhythm of NR0B2 expression by binding rhythmically to its promoter. Mediates the diurnal variation in the expression of GABARA1 receptor in the brain and contributes to the regulation of anxiety-like behaviors and GABAergic neurotransmission in the ventral striatum. This is Neuronal PAS domain-containing protein 2 (NPAS2) from Homo sapiens (Human).